The chain runs to 217 residues: Glycine betaine/carnitine/choline transport system permease protein OpuCB (217 aa).

The ABC transmembrane type-1 domain occupies 19–198; that stretch reads TGEHLYISLI…ILAIIIDYVL (180 aa). 6 helical membrane-spanning segments follow: residues 23-43, 52-74, 84-101, 128-148, 150-170, and 180-200; these read LYIS…LGVA, GAVI…AFFI, AIVA…RNTY, LVEI…STIY, IGWA…YIFI, and IIGG…VLAV.

It belongs to the binding-protein-dependent transport system permease family. CysTW subfamily. As to quaternary structure, the complex is composed of two ATP-binding proteins (OpuCA), two transmembrane proteins (OpuCB and OpuCD) and a solute-binding protein (OpuCC).

It is found in the cell membrane. In terms of biological role, involved in a high affinity multicomponent binding-protein-dependent transport system for glycine betaine, carnitine and choline; probably responsible for the translocation of the substrate across the membrane. The protein is Glycine betaine/carnitine/choline transport system permease protein OpuCB (opuCB) of Bacillus subtilis (strain 168).